The chain runs to 106 residues: uncharacterized protein (106 aa).

This is an uncharacterized protein from Saccharomyces cerevisiae (strain ATCC 204508 / S288c) (Baker's yeast).